A 299-amino-acid polypeptide reads, in one-letter code: Elongation factor Ts (299 aa).

Residues 81-84 (TDFV) form an involved in Mg(2+) ion dislocation from EF-Tu region.

The protein belongs to the EF-Ts family.

The protein localises to the cytoplasm. Associates with the EF-Tu.GDP complex and induces the exchange of GDP to GTP. It remains bound to the aminoacyl-tRNA.EF-Tu.GTP complex up to the GTP hydrolysis stage on the ribosome. The sequence is that of Elongation factor Ts from Halothermothrix orenii (strain H 168 / OCM 544 / DSM 9562).